The sequence spans 251 residues: Protein TK1472 (251 aa).

Belongs to the CinA family.

This Thermococcus kodakarensis (strain ATCC BAA-918 / JCM 12380 / KOD1) (Pyrococcus kodakaraensis (strain KOD1)) protein is Protein TK1472.